The following is a 118-amino-acid chain: NLIQFGNMIQCANKGSRPSLDYADYGCYCGWGGSGTPVDELDRCCQTHDNCYEQAGKKGCFPKLTLYSWKCTGNAPTCNSKPGCKRFVCACDAAAAKCFAKAPYKKENYNIDTKKRCK.

Cystine bridges form between Cys11–Cys71, Cys27–Cys117, Cys29–Cys45, Cys44–Cys98, Cys51–Cys91, Cys60–Cys84, and Cys78–Cys89. The Ca(2+) site is built by Tyr28, Gly30, and Gly32. His48 is a catalytic residue. Residue Asp49 coordinates Ca(2+). Asp92 is an active-site residue.

Belongs to the phospholipase A2 family. Group I subfamily. D49 sub-subfamily. Requires Ca(2+) as cofactor. Expressed by the venom gland.

The protein resides in the secreted. The catalysed reaction is a 1,2-diacyl-sn-glycero-3-phosphocholine + H2O = a 1-acyl-sn-glycero-3-phosphocholine + a fatty acid + H(+). Functionally, PLA2 catalyzes the calcium-dependent hydrolysis of the 2-acyl groups in 3-sn-phosphoglycerides. In Pseudechis australis (Mulga snake), this protein is Basic phospholipase A2 PA-12C.